Here is a 543-residue protein sequence, read N- to C-terminus: Chaperonin GroEL (543 aa).

ATP-binding positions include 29–32 (TIGP), 86–90 (DGTTT), Gly413, 478–480 (NAA), and Asp494.

The protein belongs to the chaperonin (HSP60) family. Forms a cylinder of 14 subunits composed of two heptameric rings stacked back-to-back. Interacts with the co-chaperonin GroES.

The protein localises to the cytoplasm. It catalyses the reaction ATP + H2O + a folded polypeptide = ADP + phosphate + an unfolded polypeptide.. In terms of biological role, together with its co-chaperonin GroES, plays an essential role in assisting protein folding. The GroEL-GroES system forms a nano-cage that allows encapsulation of the non-native substrate proteins and provides a physical environment optimized to promote and accelerate protein folding. The protein is Chaperonin GroEL of Limosilactobacillus fermentum (strain NBRC 3956 / LMG 18251) (Lactobacillus fermentum).